Consider the following 53-residue polypeptide: Small, acid-soluble spore protein O (53 aa).

Residues 1-53 (MVRKKANHSRPGMNAAKAQGKDAGLTSQFHAEIGQEPLNQAQRQNNKKRKKNQ) form a disordered region.

The protein belongs to the SspO family.

Its subcellular location is the spore core. The protein is Small, acid-soluble spore protein O of Halalkalibacterium halodurans (strain ATCC BAA-125 / DSM 18197 / FERM 7344 / JCM 9153 / C-125) (Bacillus halodurans).